The primary structure comprises 232 residues: 7-cyano-7-deazaguanine synthase (232 aa).

8 to 18 (FSGGQDSTTCL) serves as a coordination point for ATP. Zn(2+) is bound by residues Cys188, Cys197, Cys200, and Cys203.

This sequence belongs to the QueC family. The cofactor is Zn(2+).

It carries out the reaction 7-carboxy-7-deazaguanine + NH4(+) + ATP = 7-cyano-7-deazaguanine + ADP + phosphate + H2O + H(+). The protein operates within purine metabolism; 7-cyano-7-deazaguanine biosynthesis. In terms of biological role, catalyzes the ATP-dependent conversion of 7-carboxy-7-deazaguanine (CDG) to 7-cyano-7-deazaguanine (preQ(0)). In Buchnera aphidicola subsp. Schizaphis graminum (strain Sg), this protein is 7-cyano-7-deazaguanine synthase.